An 83-amino-acid chain; its full sequence is MQIKVLYFAKSREVAGVNEQTFELGDGAHTEDLLAQIIAAHPALDSVMKTCVFALNQEYVRPQDKEALKDGDEVAIIPPLSGG.

Gly83 is subject to 1-thioglycine; alternate. At Gly83 the chain carries Glycyl adenylate; alternate.

It belongs to the MoaD family. MOCS2A subfamily. As to quaternary structure, heterotetramer; composed of 2 small (MOCS2A) and 2 large (MOCS2B) subunits. In terms of processing, C-terminal thiocarboxylation occurs in 2 steps, it is first acyl-adenylated (-COAMP) via the hesA/moeB/thiF part of MOCS3, then thiocarboxylated (-COSH) via the rhodanese domain of MOCS3.

The protein resides in the cytoplasm. The protein operates within cofactor biosynthesis; molybdopterin biosynthesis. In terms of biological role, acts as a sulfur carrier required for molybdopterin biosynthesis. Component of the molybdopterin synthase complex that catalyzes the conversion of precursor Z into molybdopterin by mediating the incorporation of 2 sulfur atoms into precursor Z to generate a dithiolene group. In the complex, serves as sulfur donor by being thiocarboxylated (-COSH) at its C-terminus by MOCS3. After interaction with MOCS2B, the sulfur is then transferred to precursor Z to form molybdopterin. The chain is Molybdopterin synthase sulfur carrier subunit from Chlamydomonas reinhardtii (Chlamydomonas smithii).